We begin with the raw amino-acid sequence, 92 residues long: Protein OP-ORF (92 aa).

A coiled-coil region spans residues 53–82; the sequence is KMLAATISILEEEVTELVTELNNTTNLTAK.

The sequence is that of Protein OP-ORF from Rice dwarf virus (isolate Fujian) (RDV).